Here is a 451-residue protein sequence, read N- to C-terminus: MSQRSTKMGDTIAAIATASGAAGIGIIRISGSQIKTIATGLGMTTLRPRYAHYTRFLDVDDQVIDDGLAIWFPAPHSFTGEDVLELQGHGSPLLLRQLLTRCLDLGARQARPGEFSERAFLNGKLDLIQAEAIADMIGAADLRAARAARRSLDGVFSRRCEALAQQLVRLRIHVEATIDFADESLDTLDRAQIRTSLQTLNVELTQLLRDAEHGKRLCDGLYTVLVGPPNVGKSSLLNALIGSDRAIVTDVPGTTRDTLRESVHFHGLEFVLVDTAGLRGEGDAIEREGMRRTLNELQRADLALVVLDACDPQIGSLALADALTSVPRVLWIHNKLDLLTEPPSVLDTDVIPVSAMTGAGLDTLKTRLRTLLLGETVETIEGEFSARLRHVQALQRTAAHVTDANAQFSYEHLELTAEELRLAYKALGEINGSMSPDELLGRIFSNFCIGK.

Residues arginine 28, glutamate 85, and lysine 124 each coordinate (6S)-5-formyl-5,6,7,8-tetrahydrofolate. The 154-residue stretch at 220-373 (GLYTVLVGPP…LKTRLRTLLL (154 aa)) folds into the TrmE-type G domain. K(+) is bound at residue asparagine 230. GTP-binding positions include 230–235 (NVGKSS), 249–255 (TDVPGTT), and 274–277 (DTAG). A Mg(2+)-binding site is contributed by serine 234. 3 residues coordinate K(+): threonine 249, valine 251, and threonine 254. Threonine 255 serves as a coordination point for Mg(2+). Residue lysine 451 coordinates (6S)-5-formyl-5,6,7,8-tetrahydrofolate.

Belongs to the TRAFAC class TrmE-Era-EngA-EngB-Septin-like GTPase superfamily. TrmE GTPase family. Homodimer. Heterotetramer of two MnmE and two MnmG subunits. Requires K(+) as cofactor.

The protein localises to the cytoplasm. Functionally, exhibits a very high intrinsic GTPase hydrolysis rate. Involved in the addition of a carboxymethylaminomethyl (cmnm) group at the wobble position (U34) of certain tRNAs, forming tRNA-cmnm(5)s(2)U34. The polypeptide is tRNA modification GTPase MnmE (Xylella fastidiosa (strain Temecula1 / ATCC 700964)).